Here is a 280-residue protein sequence, read N- to C-terminus: Golgi phosphoprotein 3-like B (280 aa).

A disordered region spans residues 1-32; the sequence is MTTLIRRGRRAEEGQERRADSEDSIKDKDEED. A compositionally biased stretch (basic and acidic residues) spans 10 to 32; the sequence is RAEEGQERRADSEDSIKDKDEED. A 1,2-diacyl-sn-glycero-3-phospho-(1D-myo-inositol 4-phosphate)-binding residues include W62, R71, R152, and R155. The beta-hairpin required for oligomerization stretch occupies residues 171–182; that stretch reads EKQNFLLFDMTT.

Belongs to the GOLPH3/VPS74 family. As to quaternary structure, homooligomer.

It localises to the golgi apparatus. The protein localises to the golgi stack membrane. It is found in the trans-Golgi network membrane. In terms of biological role, phosphatidylinositol-4-phosphate-binding protein that may play a role in the process of vesicle budding at the Golgi and anterograde transport to the plasma membrane. This Xenopus laevis (African clawed frog) protein is Golgi phosphoprotein 3-like B (golph3l-b).